The following is a 621-amino-acid chain: Probable potassium transport system protein Kup 2 (621 aa).

12 consecutive transmembrane segments (helical) span residues 12-32 (ITVAAIGVVFGDIGTSPLYAL), 52-72 (VLSLVFWAIIVLVTIKYVAII), 101-121 (WIITLLGIFAAALFYGDSMIT), 138-158 (PDLKSYVIPITLGILTGLFFI), 166-186 (VGKLFGPVMVAWFGILAILGL), 213-233 (GLAFLALGSVVLAVTGGEALY), 249-269 (FGFVMPALVLNYFGQGALLLI), 286-306 (ALIPMVGLATAATVIASQAVI), 338-358 (IYVPFTNWSLYLAVIALVIGF), 370-390 (IAVTGTMLIDTILVAFVMVLM), 396-416 (LLVALVAGTLLLVDIAFFAAN), and 420-440 (IPEGGWFPLAMGLVSFTVLTT).

The protein belongs to the HAK/KUP transporter (TC 2.A.72) family.

It is found in the cell inner membrane. The catalysed reaction is K(+)(in) + H(+)(in) = K(+)(out) + H(+)(out). Its function is as follows. Transport of potassium into the cell. Likely operates as a K(+):H(+) symporter. The sequence is that of Probable potassium transport system protein Kup 2 from Dechloromonas aromatica (strain RCB).